A 317-amino-acid polypeptide reads, in one-letter code: Cold tolerance protein 1 (317 aa).

The protein belongs to the CTO1 family.

Protein required for cold tolerance. Plays a role in the regulation of phosphate uptake. The sequence is that of Cold tolerance protein 1 from Saccharomyces cerevisiae (strain ATCC 204508 / S288c) (Baker's yeast).